We begin with the raw amino-acid sequence, 299 residues long: Probable lipid kinase YegS (299 aa).

The DAGKc domain maps to alanine 2–threonine 133. ATP-binding positions include threonine 40, glycine 66–glutamate 72, and threonine 95. 3 residues coordinate Mg(2+): leucine 215, aspartate 218, and leucine 220. Glutamate 271 functions as the Proton acceptor in the catalytic mechanism.

It belongs to the diacylglycerol/lipid kinase family. YegS lipid kinase subfamily. It depends on Mg(2+) as a cofactor. Ca(2+) serves as cofactor.

The protein resides in the cytoplasm. In terms of biological role, probably phosphorylates lipids; the in vivo substrate is unknown. This Shigella boydii serotype 18 (strain CDC 3083-94 / BS512) protein is Probable lipid kinase YegS.